Reading from the N-terminus, the 463-residue chain is Tryptophan aminotransferase-related protein 4 (463 aa).

Residues 6–26 (LLLIVSIILNLVFTIHILYYS) traverse the membrane as a helical segment. Pyridoxal 5'-phosphate contacts are provided by residues Tyr-124, 163–164 (TT), Asn-239, 259–262 (DYAY), 282–285 (SLSK), and Arg-293. Residue Lys-285 is modified to N6-(pyridoxal phosphate)lysine.

The protein belongs to the alliinase family. It depends on pyridoxal 5'-phosphate as a cofactor.

The protein localises to the membrane. Probable aminotransferase. In Arabidopsis thaliana (Mouse-ear cress), this protein is Tryptophan aminotransferase-related protein 4 (TAR4).